Here is an 86-residue protein sequence, read N- to C-terminus: MEKLTILILVATVLLAIQVLGQGEGEKPPKEWVQQYAAKRLWALMKGPRQCTPKDAPCDDNNQCCSGLECKCFNMPDCQSGSTCRV.

Positions 1–23 (MEKLTILILVATVLLAIQVLGQG) are cleaved as a signal peptide. A propeptide spanning residues 24–49 (EGEKPPKEWVQQYAAKRLWALMKGPR) is cleaved from the precursor. Position 50 is a pyrrolidone carboxylic acid (Gln50).

Belongs to the conotoxin O2 superfamily. Contains 4 disulfide bonds. Expressed by the venom duct.

It is found in the secreted. This Conus emaciatus (False virgin cone) protein is Conotoxin Ec15a.